Reading from the N-terminus, the 362-residue chain is Porin Omp2b (362 aa).

An N-terminal signal peptide occupies residues 1–22 (MNIKSLLLGSAAALVAASGAQA).

This sequence belongs to the alphaproteobacteria porin family. Homotrimer.

It is found in the cell outer membrane. Functionally, forms passive diffusion pores that allow small molecular weight hydrophilic materials across the outer membrane. The protein is Porin Omp2b (omp2b) of Brucella suis biovar 1 (strain 1330).